A 113-amino-acid chain; its full sequence is Large ribosomal subunit protein bL17 (113 aa).

This sequence belongs to the bacterial ribosomal protein bL17 family. Part of the 50S ribosomal subunit. Contacts protein L32.

This is Large ribosomal subunit protein bL17 from Symbiobacterium thermophilum (strain DSM 24528 / JCM 14929 / IAM 14863 / T).